The primary structure comprises 293 residues: Fructose-bisphosphate aldolase (293 aa).

Ser-50 provides a ligand contact to D-glyceraldehyde 3-phosphate. The active-site Proton donor is the Asp-85. Zn(2+) contacts are provided by His-86, Asp-106, Glu-136, and His-178. Gly-179 serves as a coordination point for dihydroxyacetone phosphate. His-208 contributes to the Zn(2+) binding site. Dihydroxyacetone phosphate-binding positions include 209–211 and 230–233; these read GGS and NVNT.

The protein belongs to the class II fructose-bisphosphate aldolase family. It depends on Zn(2+) as a cofactor.

The catalysed reaction is beta-D-fructose 1,6-bisphosphate = D-glyceraldehyde 3-phosphate + dihydroxyacetone phosphate. The protein operates within carbohydrate degradation; glycolysis; D-glyceraldehyde 3-phosphate and glycerone phosphate from D-glucose: step 4/4. Catalyzes the aldol condensation of dihydroxyacetone phosphate (DHAP or glycerone-phosphate) with glyceraldehyde 3-phosphate (G3P) to form fructose 1,6-bisphosphate (FBP) in gluconeogenesis and the reverse reaction in glycolysis. The sequence is that of Fructose-bisphosphate aldolase (fba) from Streptococcus pyogenes serotype M1.